The sequence spans 306 residues: Glutaminase (306 aa).

S64, N115, E159, N166, Y190, Y242, and V260 together coordinate substrate.

Belongs to the glutaminase family. Homotetramer.

It catalyses the reaction L-glutamine + H2O = L-glutamate + NH4(+). This chain is Glutaminase, found in Aliivibrio salmonicida (strain LFI1238) (Vibrio salmonicida (strain LFI1238)).